Here is a 249-residue protein sequence, read N- to C-terminus: Purine nucleoside phosphorylase ML0918 (249 aa).

Zn(2+) contacts are provided by His72, Cys109, and His126.

Belongs to the purine nucleoside phosphorylase YfiH/LACC1 family. As to quaternary structure, homodimer. Cu(2+) is required as a cofactor. It depends on Zn(2+) as a cofactor.

It carries out the reaction adenosine + phosphate = alpha-D-ribose 1-phosphate + adenine. The catalysed reaction is S-methyl-5'-thioadenosine + phosphate = 5-(methylsulfanyl)-alpha-D-ribose 1-phosphate + adenine. The enzyme catalyses inosine + phosphate = alpha-D-ribose 1-phosphate + hypoxanthine. It catalyses the reaction adenosine + H2O + H(+) = inosine + NH4(+). In terms of biological role, purine nucleoside enzyme that catalyzes the phosphorolysis of adenosine and inosine nucleosides, yielding D-ribose 1-phosphate and the respective free bases, adenine and hypoxanthine. Also catalyzes the phosphorolysis of S-methyl-5'-thioadenosine into adenine and S-methyl-5-thio-alpha-D-ribose 1-phosphate. Also has adenosine deaminase activity. The polypeptide is Purine nucleoside phosphorylase ML0918 (Mycobacterium leprae (strain TN)).